A 401-amino-acid polypeptide reads, in one-letter code: MNEVVQSPAIQPLPKSAPTAGKQNLLDLDRAGLEKFFVEVLGEKKFRAHQVMKWIHHRYVTDFDEMTDLGKVLRAKLQAHAEVLVPNIVFDKPSADGTHKWLLAMGVDGKNAIETVYIPDKTRGTLCVSSQVGCGLNCTFCSTATQGFNRNLTTAEIIGQVWVAARHLGNVPHQMRRLTNVVMMGMGEPLMNFDNVVRAMSVMRDDLGYGLANKRVTLSTSGLVPQIDRLSAESDVSLAVSLHAPNDALRETLVPLNKKYPIAELMASCARYLRANKRRESVTFEYTLMKGINDKPEHARELARLMRQFDNAVQAKDSGKVNLIPFNPFPGTRYERSEEAHIRAFQKILLDSNVLTMVRRTRGDDIDAACGQLKGQVMDRTRRQAEFNKTLQAGKGSDAAA.

Glu-114 (proton acceptor) is an active-site residue. One can recognise a Radical SAM core domain in the interval Asp-120 to Asp-365. Cys-127 and Cys-370 are joined by a disulfide. Residues Cys-134, Cys-138, and Cys-141 each contribute to the [4Fe-4S] cluster site. S-adenosyl-L-methionine is bound by residues Gly-187–Glu-188, Ser-219, Ser-241–His-243, and Asn-327. The active-site S-methylcysteine intermediate is the Cys-370.

This sequence belongs to the radical SAM superfamily. RlmN family. The cofactor is [4Fe-4S] cluster.

The protein resides in the cytoplasm. It carries out the reaction adenosine(2503) in 23S rRNA + 2 reduced [2Fe-2S]-[ferredoxin] + 2 S-adenosyl-L-methionine = 2-methyladenosine(2503) in 23S rRNA + 5'-deoxyadenosine + L-methionine + 2 oxidized [2Fe-2S]-[ferredoxin] + S-adenosyl-L-homocysteine. The catalysed reaction is adenosine(37) in tRNA + 2 reduced [2Fe-2S]-[ferredoxin] + 2 S-adenosyl-L-methionine = 2-methyladenosine(37) in tRNA + 5'-deoxyadenosine + L-methionine + 2 oxidized [2Fe-2S]-[ferredoxin] + S-adenosyl-L-homocysteine. Specifically methylates position 2 of adenine 2503 in 23S rRNA and position 2 of adenine 37 in tRNAs. m2A2503 modification seems to play a crucial role in the proofreading step occurring at the peptidyl transferase center and thus would serve to optimize ribosomal fidelity. The polypeptide is Dual-specificity RNA methyltransferase RlmN (Stenotrophomonas maltophilia (strain K279a)).